Reading from the N-terminus, the 366-residue chain is Anthranilate phosphoribosyltransferase (366 aa).

5-phospho-alpha-D-ribose 1-diphosphate is bound by residues G103, 106-107 (GD), T111, 113-116 (NLST), 131-139 (KHGNRASSS), and G143. Anthranilate is bound at residue G103. A Mg(2+)-binding site is contributed by S115. Residue N134 coordinates anthranilate. R189 serves as a coordination point for anthranilate. Positions 247 and 248 each coordinate Mg(2+).

Belongs to the anthranilate phosphoribosyltransferase family. Homodimer. Mg(2+) serves as cofactor.

The enzyme catalyses N-(5-phospho-beta-D-ribosyl)anthranilate + diphosphate = 5-phospho-alpha-D-ribose 1-diphosphate + anthranilate. The protein operates within amino-acid biosynthesis; L-tryptophan biosynthesis; L-tryptophan from chorismate: step 2/5. Its function is as follows. Catalyzes the transfer of the phosphoribosyl group of 5-phosphorylribose-1-pyrophosphate (PRPP) to anthranilate to yield N-(5'-phosphoribosyl)-anthranilate (PRA). This Mycobacterium leprae (strain Br4923) protein is Anthranilate phosphoribosyltransferase.